The sequence spans 565 residues: FACT complex subunit ctc-1 (565 aa).

Disordered stretches follow at residues 151–173 (GNDGGKSNGHSGTGGKGKKASAG) and 477–565 (LGDD…KKTA). A compositionally biased stretch (gly residues) spans 152 to 165 (NDGGKSNGHSGTGG). 3 stretches are compositionally biased toward acidic residues: residues 478-489 (GDDDMASSDEEA), 500-522 (DEDEESVDEDFQAESESDVAEEY), and 532-553 (GSEESDVDNRVDDEDEDMDDDE).

Belongs to the SSRP1 family. Forms a stable heterodimer with ctc-2/spt16. The dimer of ctc-1 and ctc-2 weakly associates with multiple molecules of nhp-1/nhp6 to form the FACT complex.

Its subcellular location is the nucleus. It is found in the chromosome. Functionally, component of the FACT complex, a general chromatin factor that acts to reorganize nucleosomes. The FACT complex is involved in multiple processes that require DNA as a template such as mRNA elongation, DNA replication and DNA repair. During transcription elongation the FACT complex acts as a histone chaperone that both destabilizes and restores nucleosomal structure. It facilitates the passage of RNA polymerase II and transcription by promoting the dissociation of one histone H2A-H2B dimer from the nucleosome, then subsequently promotes the reestablishment of the nucleosome following the passage of RNA polymerase II. The protein is FACT complex subunit ctc-1 (ctc-1) of Neurospora crassa (strain ATCC 24698 / 74-OR23-1A / CBS 708.71 / DSM 1257 / FGSC 987).